Consider the following 208-residue polypeptide: MIGMLTGRVESVETDTALIDVGGVGYEVRMSATDLSRLHAGQDTRVFTYMNLSQDAITLHGFLDRDAKKTFLQLIKVSGIGPKVAQSLLSTLTPSQLAHAIADNDATALAKAPGLGKKGAQKIILELKGSIDLSQIEGASAQAATSKSPVDTGTEQVVEGLISLGWRQQDAQQAVAEACAENDIPTPLATDDVPRVLRLALALMDRGR.

The domain I stretch occupies residues M1 to L63. A domain II region spans residues D64–Q142. The flexible linker stretch occupies residues A143 to D151. Residues D151 to R208 are domain III.

Belongs to the RuvA family. As to quaternary structure, homotetramer. Forms an RuvA(8)-RuvB(12)-Holliday junction (HJ) complex. HJ DNA is sandwiched between 2 RuvA tetramers; dsDNA enters through RuvA and exits via RuvB. An RuvB hexamer assembles on each DNA strand where it exits the tetramer. Each RuvB hexamer is contacted by two RuvA subunits (via domain III) on 2 adjacent RuvB subunits; this complex drives branch migration. In the full resolvosome a probable DNA-RuvA(4)-RuvB(12)-RuvC(2) complex forms which resolves the HJ.

The protein localises to the cytoplasm. The RuvA-RuvB-RuvC complex processes Holliday junction (HJ) DNA during genetic recombination and DNA repair, while the RuvA-RuvB complex plays an important role in the rescue of blocked DNA replication forks via replication fork reversal (RFR). RuvA specifically binds to HJ cruciform DNA, conferring on it an open structure. The RuvB hexamer acts as an ATP-dependent pump, pulling dsDNA into and through the RuvAB complex. HJ branch migration allows RuvC to scan DNA until it finds its consensus sequence, where it cleaves and resolves the cruciform DNA. The chain is Holliday junction branch migration complex subunit RuvA from Bifidobacterium longum (strain DJO10A).